Consider the following 630-residue polypeptide: Sodium-dependent serotonin transporter (630 aa).

Over 1-87 (METTPLNSQK…ERETWGKKVD (87 aa)) the chain is Cytoplasmic. Positions 31-59 (VPTPGDKVESGQISNGYSAVPSPGAGDDT) are disordered. At Tyr47 the chain carries Phosphotyrosine. Residues 88–112 (FLLSVIGYAVDLGNVWRFPYICYQN) form a helical membrane-spanning segment. 5 residues coordinate Na(+): Gly94, Ala96, Val97, Asp98, and Asn101. Asp98 is a binding site for serotonin. Residues 113–115 (GGG) are Extracellular-facing. A helical membrane pass occupies residues 116 to 135 (AFLIPYTIMAIFGGIPLFYM). The Cytoplasmic portion of the chain corresponds to 136–160 (ELALGQYHRNGCISIWRKICPIFKG). At Tyr142 the chain carries Phosphotyrosine. A helical transmembrane segment spans residues 161 to 186 (IGYAICIIAFYIASYYNTIMAWALYY). Residues 187-252 (LISSFTDQLP…KGLQDLGGIS (66 aa)) lie on the Extracellular side of the membrane. An intrachain disulfide couples Cys200 to Cys209. N-linked (GlcNAc...) asparagine glycans are attached at residues Asn208 and Asn217. The chain crosses the membrane as a helical span at residues 253–271 (WQLALCIMLIFTVIYFSIW). The Cytoplasmic portion of the chain corresponds to 272–277 (KGVKTS). Thr276 bears the Phosphothreonine mark. A helical membrane pass occupies residues 278–297 (GKVVWVTATFPYIILSVLLV). The Extracellular segment spans residues 298 to 324 (RGATLPGAWRGVLFYLKPNWQKLLETG). The chain crosses the membrane as a helical span at residues 325–347 (VWIDAAAQIFFSLGPGFGVLLAF). Residue Ser336 coordinates Na(+). Topologically, residues 348 to 360 (ASYNKFNNNCYQD) are cytoplasmic. A helical transmembrane segment spans residues 361 to 380 (ALVTSVVNCMTSFVSGFVIF). Position 368 (Asn368) interacts with Na(+). Residues 381-421 (TVLGYMAEMRNEDVSEVAKDAGPSLLFITYAEAIANMPAST) are Extracellular-facing. Residues 422-443 (FFAIIFFLMLITLGLDSTFAGL) traverse the membrane as a helical segment. Positions 434, 437, and 438 each coordinate Na(+). Thr439 serves as a coordination point for serotonin. Over 444 to 463 (EGVITAVLDEFPHIWAKRRE) the chain is Cytoplasmic. Residues 464–483 (WFVLAVVITCFFGSLVTLTF) traverse the membrane as a helical segment. The Extracellular segment spans residues 484–494 (GGAYVVKLLEE). Serotonin-binding residues include Glu494 and Tyr495. A helical transmembrane segment spans residues 495–516 (YATGPAVLTVALIEAVAVSWFY). The Cytoplasmic portion of the chain corresponds to 517-538 (GITQFCRDVKEMLGFSPGWFWR). Residues 539–558 (ICWVAISPLFLLFIICSFLM) form a helical membrane-spanning segment. Serotonin-binding residues include Phe556 and Ser559. At 559–574 (SPPQLRLFQYNYPHWS) the chain is on the extracellular side. Residues 575 to 595 (IILGYCIGTSSFVCIPTYIAY) form a helical membrane-spanning segment. Residues 596 to 630 (RLISTPGTFKERIIKSITPETPTEIPCGDVRLNAV) are Cytoplasmic-facing. An interaction with RAB4A region spans residues 616 to 624 (TPTEIPCGD).

It belongs to the sodium:neurotransmitter symporter (SNF) (TC 2.A.22) family. SLC6A4 subfamily. In terms of assembly, monomer or homooligomer. Interacts (via C-terminus) with SCAMP2; the interaction is direct and retains transporter molecules intracellularly. Interacts with filamentous actin and STX1A. Interacts (via the N-terminus) with STX1A (via the H3 domain); this interaction regulates SLC4A6 channel conductance. Interacts with SEC23A, SEC24C and PATJ. Interacts with NOS1; the interaction may diminish the cell surface localization of SERT in the brain and, correspondingly, reduce serotonin reuptake. Interacts with TGFB1I1. Interacts with ITGAV:ITGB3. Interacts (via C-terminus) with ITGB3; this interaction regulates SLC6A4 trafficking. Phosphorylation at Thr-276 increases 5-HT uptake and is required for cGMP-mediated SERT regulation.

The protein localises to the cell membrane. It is found in the endomembrane system. The protein resides in the endosome membrane. It localises to the synapse. Its subcellular location is the cell junction. The protein localises to the focal adhesion. It is found in the cell projection. The protein resides in the neuron projection. The enzyme catalyses serotonin(out) + K(+)(in) + Na(+)(out) + H(+)(in) = serotonin(in) + K(+)(out) + Na(+)(in) + H(+)(out). Serotonin transporter that cotransports serotonin with one Na(+) ion in exchange for one K(+) ion and possibly one proton in an overall electroneutral transport cycle. Transports serotonin across the plasma membrane from the extracellular compartment to the cytosol thus limiting serotonin intercellular signaling. Essential for serotonin homeostasis in the central nervous system. In the developing somatosensory cortex, acts in glutamatergic neurons to control serotonin uptake and its trophic functions accounting for proper spatial organization of cortical neurons and elaboration of sensory circuits. In the mature cortex, acts primarily in brainstem raphe neurons to mediate serotonin uptake from the synaptic cleft back into the pre-synaptic terminal thus terminating serotonin signaling at the synapse. Modulates mucosal serotonin levels in the gastrointestinal tract through uptake and clearance of serotonin in enterocytes. Required for enteric neurogenesis and gastrointestinal reflexes. Regulates blood serotonin levels by ensuring rapid high affinity uptake of serotonin from plasma to platelets, where it is further stored in dense granules via vesicular monoamine transporters and then released upon stimulation. Mechanistically, the transport cycle starts with an outward-open conformation having Na1(+) and Cl(-) sites occupied. The binding of a second extracellular Na2(+) ion and serotonin substrate leads to structural changes to outward-occluded to inward-occluded to inward-open, where the Na2(+) ion and serotonin are released into the cytosol. Binding of intracellular K(+) ion induces conformational transitions to inward-occluded to outward-open and completes the cycle by releasing K(+) possibly together with a proton bound to Asp-98 into the extracellular compartment. Na1(+) and Cl(-) ions remain bound throughout the transport cycle. Additionally, displays serotonin-induced channel-like conductance for monovalent cations, mainly Na(+) ions. The channel activity is uncoupled from the transport cycle and may contribute to the membrane resting potential or excitability. In Macaca mulatta (Rhesus macaque), this protein is Sodium-dependent serotonin transporter (SLC6A4).